The following is a 204-amino-acid chain: Wound-induced proteinase inhibitor 2 (204 aa).

Positions 1 to 25 are cleaved as a signal peptide; sequence MAVPKEVSFLASLLVLGILLLHVDA. Tandem repeats lie at residues 25-67, 68-125, and 126-183. 6 disulfide bridges follow: cysteine 28-cysteine 100, cysteine 38-cysteine 75, cysteine 41-cysteine 59, cysteine 42-cysteine 71, cysteine 48-cysteine 84, and cysteine 99-cysteine 117. A 4; truncated repeat occupies 184–204; sequence PKACPKNCDPNIAYSLCLYEK.

This sequence belongs to the protease inhibitor I20 (potato type II proteinase inhibitor) family.

The sequence is that of Wound-induced proteinase inhibitor 2 (PIN2) from Capsicum annuum (Capsicum pepper).